The sequence spans 470 residues: 63 kDa sperm flagellar membrane protein (470 aa).

The N-terminal stretch at 1–25 (MFCHLHCMLVVFSLLLTLTGSFVNA) is a signal peptide. The 40-residue stretch at 41-80 (PPDPCASNPCTIASTHCVAAGESHTCECRPGYFETNGNCT) folds into the EGF-like 1 domain. 3 disulfide bridges follow: Cys-45-Cys-57, Cys-50-Cys-66, and Cys-68-Cys-79. N-linked (GlcNAc...) asparagine glycosylation is found at Asn-78, Asn-170, and Asn-219. The SEA domain maps to 81–205 (VAQQFAGSFS…STITVSDFDE (125 aa)). An EGF-like 2; calcium-binding domain is found at 202–250 (DFDECASADDNDCDPNANCTNTAGSFTCECDTELYDNSPNTEEPGRVCI). 6 disulfide bridges follow: Cys-206–Cys-220, Cys-214–Cys-229, Cys-231–Cys-249, Cys-253–Cys-265, Cys-258–Cys-277, and Cys-279–Cys-291. The EGF-like 3 domain occupies 249–292 (CIAPCDPGLCTRPNEICNNGGTIEDDNLCKCIEGYDYTQYGDCD). The N-linked (GlcNAc...) asparagine glycan is linked to Asn-322. The GPI-anchor amidated glycine moiety is linked to residue Gly-446. Positions 447–470 (SQRHLPVCGVLSLVVTTLLALMLH) are cleaved as a propeptide — removed in mature form.

Sperm.

It is found in the cell projection. The protein resides in the cilium. The protein localises to the flagellum membrane. This chain is 63 kDa sperm flagellar membrane protein, found in Strongylocentrotus purpuratus (Purple sea urchin).